The primary structure comprises 1341 residues: DNA-directed RNA polymerase subunit beta (1341 aa).

Belongs to the RNA polymerase beta chain family. The RNAP catalytic core consists of 2 alpha, 1 beta, 1 beta' and 1 omega subunit. When a sigma factor is associated with the core the holoenzyme is formed, which can initiate transcription.

It carries out the reaction RNA(n) + a ribonucleoside 5'-triphosphate = RNA(n+1) + diphosphate. Functionally, DNA-dependent RNA polymerase catalyzes the transcription of DNA into RNA using the four ribonucleoside triphosphates as substrates. In Pseudoalteromonas translucida (strain TAC 125), this protein is DNA-directed RNA polymerase subunit beta.